The following is a 109-amino-acid chain: ATP-dependent Clp protease adapter protein ClpS (109 aa).

Belongs to the ClpS family. Binds to the N-terminal domain of the chaperone ClpA.

Its function is as follows. Involved in the modulation of the specificity of the ClpAP-mediated ATP-dependent protein degradation. This Lawsonia intracellularis (strain PHE/MN1-00) protein is ATP-dependent Clp protease adapter protein ClpS.